Here is a 274-residue protein sequence, read N- to C-terminus: Glutamate racemase (274 aa).

Residues 9-10 (DS) and 41-42 (YG) each bind substrate. Cys73 functions as the Proton donor/acceptor in the catalytic mechanism. 74–75 (NT) is a substrate binding site. Residue Cys183 is the Proton donor/acceptor of the active site. 184–185 (TH) contributes to the substrate binding site.

This sequence belongs to the aspartate/glutamate racemases family.

The catalysed reaction is L-glutamate = D-glutamate. Its pathway is cell wall biogenesis; peptidoglycan biosynthesis. Its function is as follows. Provides the (R)-glutamate required for cell wall biosynthesis. This chain is Glutamate racemase, found in Shewanella baltica (strain OS223).